Consider the following 344-residue polypeptide: Dihydroorotase (344 aa).

His-14 and His-16 together coordinate Zn(2+). Substrate contacts are provided by residues 16 to 18 (HLR) and Asn-42. Lys-100, His-137, and His-175 together coordinate Zn(2+). Lys-100 is modified (N6-carboxylysine). A substrate-binding site is contributed by His-137. Leu-220 lines the substrate pocket. Asp-248 provides a ligand contact to Zn(2+). The active site involves Asp-248. Substrate-binding residues include His-252 and Ala-264.

It belongs to the metallo-dependent hydrolases superfamily. DHOase family. Class II DHOase subfamily. As to quaternary structure, homodimer. Zn(2+) is required as a cofactor.

It carries out the reaction (S)-dihydroorotate + H2O = N-carbamoyl-L-aspartate + H(+). It functions in the pathway pyrimidine metabolism; UMP biosynthesis via de novo pathway; (S)-dihydroorotate from bicarbonate: step 3/3. In terms of biological role, catalyzes the reversible cyclization of carbamoyl aspartate to dihydroorotate. In Ralstonia nicotianae (strain ATCC BAA-1114 / GMI1000) (Ralstonia solanacearum), this protein is Dihydroorotase.